Consider the following 393-residue polypeptide: Formate-dependent phosphoribosylglycinamide formyltransferase (393 aa).

N(1)-(5-phospho-beta-D-ribosyl)glycinamide-binding positions include 22 to 23 (EL) and E82. ATP-binding positions include R114, K155, 160–165 (SSGKGQ), 195–198 (EGFI), and E203. Residues 119–308 (RLAAEELKLP…QFALHARAIL (190 aa)) enclose the ATP-grasp domain. The Mg(2+) site is built by E267 and E279. Residues D286, K356, and 363-364 (RR) contribute to the N(1)-(5-phospho-beta-D-ribosyl)glycinamide site.

It belongs to the PurK/PurT family. As to quaternary structure, homodimer.

It catalyses the reaction N(1)-(5-phospho-beta-D-ribosyl)glycinamide + formate + ATP = N(2)-formyl-N(1)-(5-phospho-beta-D-ribosyl)glycinamide + ADP + phosphate + H(+). The protein operates within purine metabolism; IMP biosynthesis via de novo pathway; N(2)-formyl-N(1)-(5-phospho-D-ribosyl)glycinamide from N(1)-(5-phospho-D-ribosyl)glycinamide (formate route): step 1/1. Its function is as follows. Involved in the de novo purine biosynthesis. Catalyzes the transfer of formate to 5-phospho-ribosyl-glycinamide (GAR), producing 5-phospho-ribosyl-N-formylglycinamide (FGAR). Formate is provided by PurU via hydrolysis of 10-formyl-tetrahydrofolate. The sequence is that of Formate-dependent phosphoribosylglycinamide formyltransferase from Pseudomonas syringae pv. tomato (strain ATCC BAA-871 / DC3000).